A 299-amino-acid polypeptide reads, in one-letter code: ATP phosphoribosyltransferase (299 aa).

Belongs to the ATP phosphoribosyltransferase family. Long subfamily. As to quaternary structure, equilibrium between an active dimeric form, an inactive hexameric form and higher aggregates. Interconversion between the various forms is largely reversible and is influenced by the natural substrates and inhibitors of the enzyme. It depends on Mg(2+) as a cofactor.

It localises to the cytoplasm. The enzyme catalyses 1-(5-phospho-beta-D-ribosyl)-ATP + diphosphate = 5-phospho-alpha-D-ribose 1-diphosphate + ATP. Its pathway is amino-acid biosynthesis; L-histidine biosynthesis; L-histidine from 5-phospho-alpha-D-ribose 1-diphosphate: step 1/9. Feedback inhibited by histidine. In terms of biological role, catalyzes the condensation of ATP and 5-phosphoribose 1-diphosphate to form N'-(5'-phosphoribosyl)-ATP (PR-ATP). Has a crucial role in the pathway because the rate of histidine biosynthesis seems to be controlled primarily by regulation of HisG enzymatic activity. This is ATP phosphoribosyltransferase from Proteus mirabilis (strain HI4320).